A 971-amino-acid chain; its full sequence is Isoleucine--tRNA ligase (971 aa).

The 'HIGH' region motif lies at 64-74; that stretch reads PYANGHIHIGH. Glu602 is an L-isoleucyl-5'-AMP binding site. Positions 643–647 match the 'KMSKS' region motif; it reads KMSKS. An ATP-binding site is contributed by Lys646.

The protein belongs to the class-I aminoacyl-tRNA synthetase family. IleS type 1 subfamily. As to quaternary structure, monomer.

The protein resides in the cytoplasm. It catalyses the reaction tRNA(Ile) + L-isoleucine + ATP = L-isoleucyl-tRNA(Ile) + AMP + diphosphate. Functionally, catalyzes the attachment of isoleucine to tRNA(Ile). As IleRS can inadvertently accommodate and process structurally similar amino acids such as valine, to avoid such errors it has two additional distinct tRNA(Ile)-dependent editing activities. One activity is designated as 'pretransfer' editing and involves the hydrolysis of activated Val-AMP. The other activity is designated 'posttransfer' editing and involves deacylation of mischarged Val-tRNA(Ile). The protein is Isoleucine--tRNA ligase of Bartonella henselae (strain ATCC 49882 / DSM 28221 / CCUG 30454 / Houston 1) (Rochalimaea henselae).